The sequence spans 330 residues: Calponin-3 (330 aa).

N6-acetyllysine is present on Lys-23. Residues Gln-26–Lys-130 enclose the Calponin-homology (CH) domain. Lys-158 is subject to N6-methyllysine. Calponin-like repeat units follow at residues Ile-164–Tyr-189, Ile-204–Tyr-229, and Ile-243–Tyr-268. Positions Pro-279–Tyr-330 are disordered. The segment covering Asp-306–Arg-318 has biased composition (basic and acidic residues).

It belongs to the calponin family.

In terms of biological role, thin filament-associated protein that is implicated in the regulation and modulation of smooth muscle contraction. It is capable of binding to actin, calmodulin and tropomyosin. The interaction of calponin with actin inhibits the actomyosin Mg-ATPase activity. This chain is Calponin-3 (Cnn3), found in Rattus norvegicus (Rat).